The sequence spans 200 residues: Pyridoxal 5'-phosphate synthase subunit PdxT (200 aa).

50 to 52 (GES) lines the L-glutamine pocket. The Nucleophile role is filled by Cys82. L-glutamine is bound by residues Arg110 and 138–139 (IR). Catalysis depends on charge relay system residues His174 and Glu176.

Belongs to the glutaminase PdxT/SNO family. In the presence of PdxS, forms a dodecamer of heterodimers. Only shows activity in the heterodimer.

It catalyses the reaction aldehydo-D-ribose 5-phosphate + D-glyceraldehyde 3-phosphate + L-glutamine = pyridoxal 5'-phosphate + L-glutamate + phosphate + 3 H2O + H(+). The enzyme catalyses L-glutamine + H2O = L-glutamate + NH4(+). It participates in cofactor biosynthesis; pyridoxal 5'-phosphate biosynthesis. Its function is as follows. Catalyzes the hydrolysis of glutamine to glutamate and ammonia as part of the biosynthesis of pyridoxal 5'-phosphate. The resulting ammonia molecule is channeled to the active site of PdxS. The chain is Pyridoxal 5'-phosphate synthase subunit PdxT from Oceanobacillus iheyensis (strain DSM 14371 / CIP 107618 / JCM 11309 / KCTC 3954 / HTE831).